Reading from the N-terminus, the 264-residue chain is Myozenin-2 (264 aa).

R53 carries the post-translational modification Omega-N-methylarginine. The segment at 98 to 134 (ESGSQQAPFTPPNTPDPRSPPNPENIAPGYSGPLKEI) is disordered. S101 is modified (phosphoserine). The segment covering 106–120 (FTPPNTPDPRSPPNP) has biased composition (pro residues). Phosphothreonine occurs at positions 107 and 111. S116 is subject to Phosphoserine.

This sequence belongs to the myozenin family. As to quaternary structure, interacts via its C-terminus with spectrin repeats 3 and 4 of ACTN2. Interacts with ACTN1, LDB3, MYOT and PPP3CA.

It is found in the cytoplasm. It localises to the myofibril. Its subcellular location is the sarcomere. The protein resides in the z line. Its function is as follows. Myozenins may serve as intracellular binding proteins involved in linking Z line proteins such as alpha-actinin, gamma-filamin, TCAP/telethonin, LDB3/ZASP and localizing calcineurin signaling to the sarcomere. Plays an important role in the modulation of calcineurin signaling. May play a role in myofibrillogenesis. This is Myozenin-2 (MYOZ2) from Bos taurus (Bovine).